A 203-amino-acid chain; its full sequence is dTTP/UTP pyrophosphatase (203 aa).

The active-site Proton acceptor is the Asp-74.

The protein belongs to the Maf family. YhdE subfamily. A divalent metal cation serves as cofactor.

The protein resides in the cytoplasm. It catalyses the reaction dTTP + H2O = dTMP + diphosphate + H(+). The enzyme catalyses UTP + H2O = UMP + diphosphate + H(+). Nucleoside triphosphate pyrophosphatase that hydrolyzes dTTP and UTP. May have a dual role in cell division arrest and in preventing the incorporation of modified nucleotides into cellular nucleic acids. The chain is dTTP/UTP pyrophosphatase from Treponema denticola (strain ATCC 35405 / DSM 14222 / CIP 103919 / JCM 8153 / KCTC 15104).